The following is a 455-amino-acid chain: Probable glycine dehydrogenase (decarboxylating) subunit 1 (455 aa).

The protein belongs to the GcvP family. N-terminal subunit subfamily. As to quaternary structure, the glycine cleavage system is composed of four proteins: P, T, L and H. In this organism, the P 'protein' is a heterodimer of two subunits.

The catalysed reaction is N(6)-[(R)-lipoyl]-L-lysyl-[glycine-cleavage complex H protein] + glycine + H(+) = N(6)-[(R)-S(8)-aminomethyldihydrolipoyl]-L-lysyl-[glycine-cleavage complex H protein] + CO2. In terms of biological role, the glycine cleavage system catalyzes the degradation of glycine. The P protein binds the alpha-amino group of glycine through its pyridoxal phosphate cofactor; CO(2) is released and the remaining methylamine moiety is then transferred to the lipoamide cofactor of the H protein. This chain is Probable glycine dehydrogenase (decarboxylating) subunit 1, found in Saccharolobus islandicus (strain Y.G.57.14 / Yellowstone #1) (Sulfolobus islandicus).